The following is a 362-amino-acid chain: Chorismate synthase (362 aa).

An NADP(+)-binding site is contributed by R47. Residues 124-126 (RAS), G286, 301-305 (KPTAT), and R327 contribute to the FMN site.

It belongs to the chorismate synthase family. In terms of assembly, homotetramer. It depends on FMNH2 as a cofactor.

It carries out the reaction 5-O-(1-carboxyvinyl)-3-phosphoshikimate = chorismate + phosphate. The protein operates within metabolic intermediate biosynthesis; chorismate biosynthesis; chorismate from D-erythrose 4-phosphate and phosphoenolpyruvate: step 7/7. Catalyzes the anti-1,4-elimination of the C-3 phosphate and the C-6 proR hydrogen from 5-enolpyruvylshikimate-3-phosphate (EPSP) to yield chorismate, which is the branch point compound that serves as the starting substrate for the three terminal pathways of aromatic amino acid biosynthesis. This reaction introduces a second double bond into the aromatic ring system. This chain is Chorismate synthase, found in Prochlorococcus marinus (strain SARG / CCMP1375 / SS120).